Consider the following 325-residue polypeptide: NADH-quinone oxidoreductase subunit H (325 aa).

8 helical membrane-spanning segments follow: residues 11-31 (VLIA…CGAL), 81-101 (MIFT…FAIV), 114-134 (IGIL…LFAG), 149-169 (ASAQ…GVVA), 186-206 (MWNV…GVAV), 237-257 (FFVG…TMFF), 265-285 (LPPF…FILI), and 304-324 (ICLP…LYNA).

Belongs to the complex I subunit 1 family. NDH-1 is composed of 13 different subunits. Subunits NuoA, H, J, K, L, M, N constitute the membrane sector of the complex.

The protein resides in the cell inner membrane. The enzyme catalyses a quinone + NADH + 5 H(+)(in) = a quinol + NAD(+) + 4 H(+)(out). Functionally, NDH-1 shuttles electrons from NADH, via FMN and iron-sulfur (Fe-S) centers, to quinones in the respiratory chain. The immediate electron acceptor for the enzyme in this species is believed to be ubiquinone. Couples the redox reaction to proton translocation (for every two electrons transferred, four hydrogen ions are translocated across the cytoplasmic membrane), and thus conserves the redox energy in a proton gradient. This subunit may bind ubiquinone. The polypeptide is NADH-quinone oxidoreductase subunit H (Photorhabdus laumondii subsp. laumondii (strain DSM 15139 / CIP 105565 / TT01) (Photorhabdus luminescens subsp. laumondii)).